Here is a 257-residue protein sequence, read N- to C-terminus: Acetylglutamate kinase (257 aa).

Substrate is bound by residues 43-44 (GG), Arg-65, and Asn-157. Residues 180–185 (DVSGIL) and 208–210 (IIT) contribute to the ATP site.

It belongs to the acetylglutamate kinase family. ArgB subfamily. In terms of assembly, homodimer.

It localises to the cytoplasm. The catalysed reaction is N-acetyl-L-glutamate + ATP = N-acetyl-L-glutamyl 5-phosphate + ADP. Its pathway is amino-acid biosynthesis; L-arginine biosynthesis; N(2)-acetyl-L-ornithine from L-glutamate: step 2/4. In terms of biological role, catalyzes the ATP-dependent phosphorylation of N-acetyl-L-glutamate. The chain is Acetylglutamate kinase from Pectobacterium atrosepticum (strain SCRI 1043 / ATCC BAA-672) (Erwinia carotovora subsp. atroseptica).